The primary structure comprises 242 residues: Large ribosomal subunit protein uL1 (242 aa).

It belongs to the universal ribosomal protein uL1 family. In terms of assembly, part of the 50S ribosomal subunit.

Functionally, binds directly to 23S rRNA. The L1 stalk is quite mobile in the ribosome, and is involved in E site tRNA release. Its function is as follows. Protein L1 is also a translational repressor protein, it controls the translation of the L11 operon by binding to its mRNA. In Wigglesworthia glossinidia brevipalpis, this protein is Large ribosomal subunit protein uL1.